A 461-amino-acid chain; its full sequence is ADP-specific phosphofructokinase (461 aa).

Residues 1–457 form the ADPK domain; it reads MVRELLEKAR…FTSYLAMLKE (457 aa). The Mg(2+) site is built by Glu-268, Glu-298, and Asp-441. Asp-441 functions as the Proton acceptor in the catalytic mechanism.

Belongs to the carbohydrate kinase PfkC family. Requires Mg(2+) as cofactor.

The protein resides in the cytoplasm. The enzyme catalyses beta-D-fructose 6-phosphate + ADP = beta-D-fructose 1,6-bisphosphate + AMP + H(+). The protein operates within carbohydrate degradation; glycolysis. Catalyzes the phosphorylation of fructose 6-phosphate to fructose 1,6-bisphosphate using ADP as the phosphate donor. In Thermococcus kodakarensis (strain ATCC BAA-918 / JCM 12380 / KOD1) (Pyrococcus kodakaraensis (strain KOD1)), this protein is ADP-specific phosphofructokinase.